We begin with the raw amino-acid sequence, 632 residues long: 1,4-alpha-glucan branching enzyme GlgB (632 aa).

Residue Asp310 is the Nucleophile of the active site. The active-site Proton donor is the Glu363.

Belongs to the glycosyl hydrolase 13 family. GlgB subfamily. In terms of assembly, monomer.

It carries out the reaction Transfers a segment of a (1-&gt;4)-alpha-D-glucan chain to a primary hydroxy group in a similar glucan chain.. Its pathway is glycan biosynthesis; glycogen biosynthesis. Catalyzes the formation of the alpha-1,6-glucosidic linkages in glycogen by scission of a 1,4-alpha-linked oligosaccharide from growing alpha-1,4-glucan chains and the subsequent attachment of the oligosaccharide to the alpha-1,6 position. This chain is 1,4-alpha-glucan branching enzyme GlgB, found in Desulfitobacterium hafniense (strain Y51).